We begin with the raw amino-acid sequence, 410 residues long: Tryptophan synthase beta chain (410 aa).

An N6-(pyridoxal phosphate)lysine modification is found at lysine 98.

It belongs to the TrpB family. As to quaternary structure, tetramer of two alpha and two beta chains. Pyridoxal 5'-phosphate serves as cofactor.

It carries out the reaction (1S,2R)-1-C-(indol-3-yl)glycerol 3-phosphate + L-serine = D-glyceraldehyde 3-phosphate + L-tryptophan + H2O. The protein operates within amino-acid biosynthesis; L-tryptophan biosynthesis; L-tryptophan from chorismate: step 5/5. The beta subunit is responsible for the synthesis of L-tryptophan from indole and L-serine. The protein is Tryptophan synthase beta chain of Roseobacter denitrificans (strain ATCC 33942 / OCh 114) (Erythrobacter sp. (strain OCh 114)).